A 71-amino-acid polypeptide reads, in one-letter code: Putative membrane protein insertion efficiency factor (71 aa).

This sequence belongs to the UPF0161 family.

Its subcellular location is the cell membrane. Its function is as follows. Could be involved in insertion of integral membrane proteins into the membrane. In Ruminiclostridium cellulolyticum (strain ATCC 35319 / DSM 5812 / JCM 6584 / H10) (Clostridium cellulolyticum), this protein is Putative membrane protein insertion efficiency factor.